Consider the following 469-residue polypeptide: Carboxypeptidase Q (469 aa).

The N-terminal stretch at 1–19 (MKTLILTLLSLYELQLCCG) is a signal peptide. Positions 20-42 (AYNQNIRSQRKFEMIKTEISSYK) are excised as a propeptide. N59 and N159 each carry an N-linked (GlcNAc...) asparagine glycan. The Zn(2+) site is built by H288 and D300. E334 (nucleophile) is an active-site residue. E335 is a Zn(2+) binding site. Residue N351 is glycosylated (N-linked (GlcNAc...) asparagine). Zn(2+) is bound at residue D362. The N-linked (GlcNAc...) asparagine glycan is linked to N394. H432 lines the Zn(2+) pocket.

This sequence belongs to the peptidase M28 family. As to quaternary structure, homodimer. The monomeric form is inactive while the homodimer is active.

The protein resides in the endoplasmic reticulum. Its subcellular location is the golgi apparatus. It is found in the lysosome. The protein localises to the secreted. In terms of biological role, carboxypeptidase that may play an important role in the hydrolysis of circulating peptides. Catalyzes more efficiently the hydrolysis of dipeptides with unsubstituted terminals into amino acids. In Xenopus laevis (African clawed frog), this protein is Carboxypeptidase Q (cpq).